We begin with the raw amino-acid sequence, 70 residues long: DNA-directed RNA polymerase subunit epsilon (70 aa).

It belongs to the RNA polymerase subunit epsilon family. As to quaternary structure, RNAP is composed of a core of 2 alpha, a beta and a beta' subunit. The core is associated with a delta subunit, and at least one of epsilon or omega. When a sigma factor is associated with the core the holoenzyme is formed, which can initiate transcription.

The catalysed reaction is RNA(n) + a ribonucleoside 5'-triphosphate = RNA(n+1) + diphosphate. A non-essential component of RNA polymerase (RNAP). This Bacillus cytotoxicus (strain DSM 22905 / CIP 110041 / 391-98 / NVH 391-98) protein is DNA-directed RNA polymerase subunit epsilon.